The primary structure comprises 400 residues: Elongation factor Tu (400 aa).

Residues K10–Q208 enclose the tr-type G domain. The G1 stretch occupies residues G19–S26. G19 to S26 contacts GTP. Position 26 (S26) interacts with Mg(2+). Positions G60–N64 are G2. Residues D81–G84 form a G3 region. GTP-binding positions include D81–H85 and N136–D139. A G4 region spans residues N136 to D139. Residues S174–L176 form a G5 region.

The protein belongs to the TRAFAC class translation factor GTPase superfamily. Classic translation factor GTPase family. EF-Tu/EF-1A subfamily. Monomer.

It localises to the cytoplasm. It catalyses the reaction GTP + H2O = GDP + phosphate + H(+). Its function is as follows. GTP hydrolase that promotes the GTP-dependent binding of aminoacyl-tRNA to the A-site of ribosomes during protein biosynthesis. This is Elongation factor Tu from Thermotoga neapolitana (strain ATCC 49049 / DSM 4359 / NBRC 107923 / NS-E).